Consider the following 786-residue polypeptide: LPS-assembly protein LptD (786 aa).

Positions 1–39 (MPPKPLFPNVFPGDGAPRKRRLALALLAVPGLVPAVSYA) are cleaved as a signal peptide. The disordered stretch occupies residues 767 to 786 (PGYTPLPPPPPPMSRFSNYE). Over residues 770–779 (TPLPPPPPPM) the composition is skewed to pro residues.

This sequence belongs to the LptD family. Component of the lipopolysaccharide transport and assembly complex. Interacts with LptE and LptA.

It is found in the cell outer membrane. Its function is as follows. Together with LptE, is involved in the assembly of lipopolysaccharide (LPS) at the surface of the outer membrane. The sequence is that of LPS-assembly protein LptD from Burkholderia cenocepacia (strain HI2424).